A 127-amino-acid polypeptide reads, in one-letter code: Fluoride-specific ion channel FluC 1 (127 aa).

A run of 3 helical transmembrane segments spans residues 6–26 (PLVTVETIVLVGLGGFAGSNL), 29–49 (FVGLFFPGLQGTLLVNVCGSF), and 95–115 (EWAVANVVGSYALGFAGVLVG).

Belongs to the fluoride channel Fluc/FEX (TC 1.A.43) family.

The protein localises to the cell membrane. It carries out the reaction fluoride(in) = fluoride(out). Its function is as follows. Fluoride-specific ion channel. Important for reducing fluoride concentration in the cell, thus reducing its toxicity. The polypeptide is Fluoride-specific ion channel FluC 1 (Haloarcula marismortui (strain ATCC 43049 / DSM 3752 / JCM 8966 / VKM B-1809) (Halobacterium marismortui)).